The primary structure comprises 520 residues: N-acetylgalactosamine-6-sulfatase (520 aa).

Positions 1-23 are cleaved as a signal peptide; that stretch reads MAACTAAQQLLLVLSALGLLAAG. Residues 24 to 377 are catalytic domain; the sequence is APQPPNIVLL…PTMLKGQMMD (354 aa). Residues Asp-36, Asp-37, and Cys-76 each contribute to the Ca(2+) site. The active-site Nucleophile is Cys-76. At Cys-76 the chain carries 3-oxoalanine (Cys). The active site involves His-139. Asn-201 carries N-linked (GlcNAc...) asparagine glycosylation. Ca(2+)-binding residues include Asp-286 and Asn-287. Cys-306 and Cys-417 are disulfide-bonded. N-linked (GlcNAc...) asparagine glycosylation is present at Asn-421. 2 disulfides stabilise this stretch: Cys-487–Cys-516 and Cys-499–Cys-505.

This sequence belongs to the sulfatase family. In terms of assembly, homodimer. Ca(2+) serves as cofactor. The conversion to 3-oxoalanine (also known as C-formylglycine, FGly), of a serine or cysteine residue in prokaryotes and of a cysteine residue in eukaryotes, is critical for catalytic activity. In terms of tissue distribution, widely expressed. Higher expression in liver and kidney.

Its subcellular location is the lysosome. The catalysed reaction is Hydrolysis of the 6-sulfate groups of the N-acetyl-D-galactosamine 6-sulfate units of chondroitin sulfate and of the D-galactose 6-sulfate units of keratan sulfate.. This chain is N-acetylgalactosamine-6-sulfatase (Galns), found in Mus musculus (Mouse).